Reading from the N-terminus, the 151-residue chain is D-aminoacyl-tRNA deacylase (151 aa).

The short motif at 138–139 (GP) is the Gly-cisPro motif, important for rejection of L-amino acids element.

The protein belongs to the DTD family. Homodimer.

The protein resides in the cytoplasm. It catalyses the reaction glycyl-tRNA(Ala) + H2O = tRNA(Ala) + glycine + H(+). The catalysed reaction is a D-aminoacyl-tRNA + H2O = a tRNA + a D-alpha-amino acid + H(+). Functionally, an aminoacyl-tRNA editing enzyme that deacylates mischarged D-aminoacyl-tRNAs. Also deacylates mischarged glycyl-tRNA(Ala), protecting cells against glycine mischarging by AlaRS. Acts via tRNA-based rather than protein-based catalysis; rejects L-amino acids rather than detecting D-amino acids in the active site. By recycling D-aminoacyl-tRNA to D-amino acids and free tRNA molecules, this enzyme counteracts the toxicity associated with the formation of D-aminoacyl-tRNA entities in vivo and helps enforce protein L-homochirality. This is D-aminoacyl-tRNA deacylase from Magnetococcus marinus (strain ATCC BAA-1437 / JCM 17883 / MC-1).